Consider the following 276-residue polypeptide: Probable endonuclease 4 (276 aa).

Residues His70, His108, Glu144, Asp177, His180, His211, Asp224, His226, and Glu256 each coordinate Zn(2+).

The protein belongs to the AP endonuclease 2 family. It depends on Zn(2+) as a cofactor.

The enzyme catalyses Endonucleolytic cleavage to 5'-phosphooligonucleotide end-products.. Functionally, endonuclease IV plays a role in DNA repair. It cleaves phosphodiester bonds at apurinic or apyrimidinic (AP) sites, generating a 3'-hydroxyl group and a 5'-terminal sugar phosphate. In Metamycoplasma arthritidis (strain 158L3-1) (Mycoplasma arthritidis), this protein is Probable endonuclease 4.